The chain runs to 102 residues: Large ribosomal subunit protein bL21 (102 aa).

The protein belongs to the bacterial ribosomal protein bL21 family. Part of the 50S ribosomal subunit. Contacts protein L20.

In terms of biological role, this protein binds to 23S rRNA in the presence of protein L20. The chain is Large ribosomal subunit protein bL21 from Nitratidesulfovibrio vulgaris (strain DSM 19637 / Miyazaki F) (Desulfovibrio vulgaris).